Consider the following 444-residue polypeptide: Tubulin beta chain (444 aa).

8 residues coordinate GTP: Gln-11, Glu-69, Ser-138, Gly-142, Thr-143, Gly-144, Asn-204, and Asn-226. Glu-69 lines the Mg(2+) pocket.

This sequence belongs to the tubulin family. Dimer of alpha and beta chains. A typical microtubule is a hollow water-filled tube with an outer diameter of 25 nm and an inner diameter of 15 nM. Alpha-beta heterodimers associate head-to-tail to form protofilaments running lengthwise along the microtubule wall with the beta-tubulin subunit facing the microtubule plus end conferring a structural polarity. Microtubules usually have 13 protofilaments but different protofilament numbers can be found in some organisms and specialized cells. It depends on Mg(2+) as a cofactor.

It localises to the cytoplasm. The protein resides in the cytoskeleton. Tubulin is the major constituent of microtubules, a cylinder consisting of laterally associated linear protofilaments composed of alpha- and beta-tubulin heterodimers. Microtubules grow by the addition of GTP-tubulin dimers to the microtubule end, where a stabilizing cap forms. Below the cap, tubulin dimers are in GDP-bound state, owing to GTPase activity of alpha-tubulin. The protein is Tubulin beta chain of Euplotoides octocarinatus (Freshwater ciliate).